The chain runs to 255 residues: Pimeloyl-[acyl-carrier protein] methyl ester esterase (255 aa).

Substrate-binding positions include W18, 78–79, and 139–143; these read SL and FLALD. S78 (nucleophile) is an active-site residue. Residues D203 and H233 contribute to the active site. H233 is a binding site for substrate.

The protein belongs to the AB hydrolase superfamily. Carboxylesterase BioH family. In terms of assembly, monomer.

It localises to the cytoplasm. It carries out the reaction 6-carboxyhexanoyl-[ACP] methyl ester + H2O = 6-carboxyhexanoyl-[ACP] + methanol + H(+). The protein operates within cofactor biosynthesis; biotin biosynthesis. Functionally, the physiological role of BioH is to remove the methyl group introduced by BioC when the pimeloyl moiety is complete. It allows to synthesize pimeloyl-ACP via the fatty acid synthetic pathway through the hydrolysis of the ester bonds of pimeloyl-ACP esters. This is Pimeloyl-[acyl-carrier protein] methyl ester esterase from Xylella fastidiosa (strain 9a5c).